The primary structure comprises 318 residues: NADH-ubiquinone oxidoreductase chain 1 (318 aa).

The next 8 helical transmembrane spans lie at 2-22 (LLTN…FLTL), 69-89 (LMFI…WAPL), 102-122 (ILFI…SGWA), 147-167 (AIIL…TLTI), 172-192 (MWLI…TLAE), 231-251 (IILM…NPLF), 253-273 (ELHT…FLWI), and 294-314 (LPLT…LAGI).

Belongs to the complex I subunit 1 family.

It localises to the mitochondrion inner membrane. The catalysed reaction is a ubiquinone + NADH + 5 H(+)(in) = a ubiquinol + NAD(+) + 4 H(+)(out). Core subunit of the mitochondrial membrane respiratory chain NADH dehydrogenase (Complex I) that is believed to belong to the minimal assembly required for catalysis. Complex I functions in the transfer of electrons from NADH to the respiratory chain. The immediate electron acceptor for the enzyme is believed to be ubiquinone. In Bradypus variegatus (Brown-throated three-fingered sloth), this protein is NADH-ubiquinone oxidoreductase chain 1 (MT-ND1).